Consider the following 538-residue polypeptide: L-aspartate oxidase (538 aa).

Residues 14 to 17, lysine 36, 43 to 50, and aspartate 223 contribute to the FAD site; these read SGAA and STYWAQGG. Arginine 290 (proton donor/acceptor) is an active-site residue. FAD is bound by residues glutamate 375 and 391 to 392; that span reads SL.

Belongs to the FAD-dependent oxidoreductase 2 family. NadB subfamily. The cofactor is FAD.

It localises to the cytoplasm. The catalysed reaction is L-aspartate + O2 = iminosuccinate + H2O2. The protein operates within cofactor biosynthesis; NAD(+) biosynthesis; iminoaspartate from L-aspartate (oxidase route): step 1/1. Functionally, catalyzes the oxidation of L-aspartate to iminoaspartate, the first step in the de novo biosynthesis of NAD(+). The protein is L-aspartate oxidase (nadB) of Pseudomonas aeruginosa (strain ATCC 15692 / DSM 22644 / CIP 104116 / JCM 14847 / LMG 12228 / 1C / PRS 101 / PAO1).